The primary structure comprises 198 residues: Large ribosomal subunit protein uL13B (198 aa).

The residue at position 2 (Ser2) is an N-acetylserine; partial. At Ser43 the chain carries Phosphoserine. Lys176 participates in a covalent cross-link: Glycyl lysine isopeptide (Lys-Gly) (interchain with G-Cter in ubiquitin). A phosphoserine mark is found at Ser181, Ser185, and Ser187.

This sequence belongs to the universal ribosomal protein uL13 family. In terms of assembly, component of the large ribosomal subunit (LSU). Mature yeast ribosomes consist of a small (40S) and a large (60S) subunit. The 40S small subunit contains 1 molecule of ribosomal RNA (18S rRNA) and 33 different proteins (encoded by 57 genes). The large 60S subunit contains 3 rRNA molecules (25S, 5.8S and 5S rRNA) and 46 different proteins (encoded by 81 genes). Post-translationally, N-terminally acetylated by acetyltransferase NatA.

It localises to the cytoplasm. In terms of biological role, component of the ribosome, a large ribonucleoprotein complex responsible for the synthesis of proteins in the cell. The small ribosomal subunit (SSU) binds messenger RNAs (mRNAs) and translates the encoded message by selecting cognate aminoacyl-transfer RNA (tRNA) molecules. The large subunit (LSU) contains the ribosomal catalytic site termed the peptidyl transferase center (PTC), which catalyzes the formation of peptide bonds, thereby polymerizing the amino acids delivered by tRNAs into a polypeptide chain. The nascent polypeptides leave the ribosome through a tunnel in the LSU and interact with protein factors that function in enzymatic processing, targeting, and the membrane insertion of nascent chains at the exit of the ribosomal tunnel. In Saccharomyces cerevisiae (strain ATCC 204508 / S288c) (Baker's yeast), this protein is Large ribosomal subunit protein uL13B.